Consider the following 654-residue polypeptide: Neuroendocrine convertase 2 (654 aa).

The N-terminal stretch at 1-21 (MAAATWSWLLAPFLLLHWASA) is a signal peptide. Positions 22–121 (GAGGGAGGSG…VQQPGFKRVK (100 aa)) are excised as a propeptide. Residues 158–483 (QWYLKNTGQN…FGVLDAGAMV (326 aa)) form the Peptidase S8 domain. The N-linked (GlcNAc...) asparagine glycan is linked to Asn-189. Active-site charge relay system residues include Asp-196 and His-237. Cystine bridges form between Cys-254–Cys-404 and Cys-346–Cys-376. An N-linked (GlcNAc...) asparagine glycan is attached at Asn-312. Catalysis depends on Ser-412, which acts as the Charge relay system. The 137-residue stretch at 491–627 (SVPPRYHCEA…SLVLHGTKEA (137 aa)) folds into the P/Homo B domain. A disulfide bridge links Cys-498 with Cys-524. An N-linked (GlcNAc...) asparagine glycan is attached at Asn-544.

The protein belongs to the peptidase S8 family. Furin subfamily. As to expression, expressed in the central nervous system (CNS) and midgut endocrine cells of third instar larva (at protein level). In the CNS, expressed in the CA-LP1 and CA-LP2 neurons which innervate the corpus allatum, and in the CC-MS2 neurons which innervate the corpora cardiaca of the ring gland. Also expressed in the CC-MS1, SP3, Tv and Va neurons. Expressed in Akh-producing cells of the corpora cardiaca. In the embryo, restricted to the final stages of embryogenesis where expression is found in anterior sensory structures and in only 168 cells in the brain and ventral nerve cord. After larvae hatch, the sensory structures and most cells in the CNS turn off or substantially reduce expression. In third instar larva, expressed at higher levels in the anterior section than in the posterior section. Little expression is detected in the adult head. In the developing eye, expressed at higher levels in pale-type R7 photoreceptor cells than in yellow-type R7 cells although expression is not seen in all pale-type R7 cells. Also expressed in outer photoreceptor cells.

It is found in the secreted. The enzyme catalyses Release of protein hormones and neuropeptides from their precursors, generally by hydrolysis of -Lys-Arg-|- bonds.. Functionally, serine endopeptidase which is involved in the processing of hormone and other protein precursors at sites comprised of pairs of basic amino acid residues. Required during embryonic and larval development, probably by proteolytically processing peptide hormones involved in hatching, larval growth and larval molting. Required for the processing and activation of Akh which maintains normal hemolymph sugar levels. Has been shown in one study to be required for processing of sli into slit N-product and slit C-product in the embryo which is necessary for lateral transverse muscle elongation but has been shown in another study not to be required for sli cleavage. Required for larval hatching. Also required for normal larval wandering behavior which occurs prior to pupariation. Required during pupal development for head eversion, leg and wing disk extension, and abdominal differentiation. Required during eye development for R8 photoreceptor cell specification by regulating processing of ligands required for the BMP and activin signaling pathways. This Drosophila melanogaster (Fruit fly) protein is Neuroendocrine convertase 2.